The primary structure comprises 438 residues: Putative F-box/FBD/LRR-repeat protein At5g44950 (438 aa).

The F-box domain maps to R3 to N49. 2 LRR repeats span residues L246–K275 and I286–Q310. The 53-residue stretch at P355–F407 folds into the FBD domain.

The polypeptide is Putative F-box/FBD/LRR-repeat protein At5g44950 (Arabidopsis thaliana (Mouse-ear cress)).